Consider the following 327-residue polypeptide: L-serine dehydratase/L-threonine deaminase (327 aa).

N-acetylalanine is present on Ala2. At Lys41 the chain carries N6-(pyridoxal phosphate)lysine. Pro128 serves as a coordination point for pyridoxal 5'-phosphate.

The protein belongs to the serine/threonine dehydratase family. In terms of assembly, homodimer. Pyridoxal 5'-phosphate is required as a cofactor.

Its subcellular location is the cytoplasm. It carries out the reaction L-serine = pyruvate + NH4(+). The enzyme catalyses L-threonine = 2-oxobutanoate + NH4(+). It participates in carbohydrate biosynthesis; gluconeogenesis. Functionally, catalyzes the pyridoxal-phosphate-dependent dehydrative deamination of L-threonine and L-serine to ammonia and alpha-ketobutyrate and pyruvate, respectively. In Mus musculus (Mouse), this protein is L-serine dehydratase/L-threonine deaminase (Sds).